The chain runs to 85 residues: U1-ctenitoxin-Pn1a (85 aa).

An N-terminal signal peptide occupies residues 1–16; sequence MKVAIVFLSLLVLAFA. The propeptide occupies 17–34; it reads SESIEENREEFPVEESAR. Intrachain disulfides connect Cys35/Cys49, Cys42/Cys55, Cys46/Cys81, Cys48/Cys65, and Cys57/Cys63. The propeptide occupies 82 to 85; sequence QNKI.

The protein belongs to the neurotoxin 03 (Tx2) family. 05 subfamily. Expressed by the venom gland.

It localises to the secreted. Its function is as follows. Insecticidal neurotoxin that reversibly inhibits the N-methyl-D-aspartate (NMDA)-subtype of ionotropic glutamate receptor (GRIN) and inhibits inactivation of insect sodium channels (Nav). In vivo, is highly toxic to insects. The polypeptide is U1-ctenitoxin-Pn1a (Phoneutria nigriventer (Brazilian armed spider)).